We begin with the raw amino-acid sequence, 29 residues long: GLPVCGETCVGGTCNTPGCTCSWPVCTRD.

A cross-link (cyclopeptide (Gly-Asp)) is located at residues 1–29 (GLPVCGETCVGGTCNTPGCTCSWPVCTRD). Cystine bridges form between Cys5–Cys19, Cys9–Cys21, and Cys14–Cys26.

This is a cyclic peptide.

Probably participates in a plant defense mechanism. The chain is Kalata-B4 from Oldenlandia affinis.